A 502-amino-acid chain; its full sequence is 4,4'-diapophytoene desaturase (4,4'-diaponeurosporene-forming) (502 aa).

An FAD-binding site is contributed by 5–17 (VIGAGVTGLAAAA).

This sequence belongs to the carotenoid/retinoid oxidoreductase family. CrtN subfamily.

It carries out the reaction 15-cis-4,4'-diapophytoene + 3 FAD + 3 H(+) = all-trans-4,4'-diaponeurosporene + 3 FADH2. The protein operates within carotenoid biosynthesis; staphyloxanthin biosynthesis; staphyloxanthin from farnesyl diphosphate: step 2/5. Its function is as follows. Involved in the biosynthesis of the yellow-orange carotenoid staphyloxanthin, which plays a role in the virulence via its protective function against oxidative stress. Catalyzes three successive dehydrogenation reactions that lead to the introduction of three double bonds into 4,4'-diapophytoene (dehydrosqualene), with 4,4'-diapophytofluene and 4,4'-diapo-zeta-carotene as intermediates, and 4,4'-diaponeurosporene (the major deep-yellow pigment in staphylococci strains) as the end product. The protein is 4,4'-diapophytoene desaturase (4,4'-diaponeurosporene-forming) of Staphylococcus aureus (strain MRSA252).